Here is a 224-residue protein sequence, read N- to C-terminus: Glutathione S-transferase U1 (224 aa).

Positions 6–85 (ESVKLLGFWA…YIDQTWKNSP (80 aa)) constitute a GST N-terminal domain. Residues 16-17 (SP), 42-43 (NK), 56-57 (KV), and 69-70 (ES) contribute to the glutathione site. The 128-residue stretch at 90–217 (DPYEKAMARF…EKQIERMTKI (128 aa)) folds into the GST C-terminal domain. Residue Thr-151 is modified to Phosphothreonine.

The protein belongs to the GST superfamily. Tau family.

It is found in the cytoplasm. The protein resides in the cytosol. It carries out the reaction RX + glutathione = an S-substituted glutathione + a halide anion + H(+). In terms of biological role, may be involved in the conjugation of reduced glutathione to a wide number of exogenous and endogenous hydrophobic electrophiles and have a detoxification role against certain herbicides. This is Glutathione S-transferase U1 (GSTU1) from Arabidopsis thaliana (Mouse-ear cress).